The following is a 501-amino-acid chain: Acetylcholine receptor subunit beta (501 aa).

The signal sequence occupies residues 1–23; that stretch reads MALGALLLLLGVLGTPLAPGARG. At 24 to 244 the chain is on the extracellular side; that stretch reads SEAEGQLIKK…VIFYLIIRRK (221 aa). Cys151 and Cys165 are oxidised to a cystine. N-linked (GlcNAc...) asparagine glycosylation occurs at Asn164. Helical transmembrane passes span 245–269, 277–295, and 311–332; these read PLFYLVNVIAPCILITLLAIFVFYL, MGLSIFALLTLTVFLLLLA, and YLMFTMVLVTFSVILSVVVLNL. Residues 333–469 lie on the Cytoplasmic side of the membrane; that stretch reads HHRSPHTHQM…WQFVAMVVDR (137 aa). The interval 362–382 is disordered; it reads RPKPERDQLPEPHHSLSPRSG. Basic and acidic residues predominate over residues 363–375; sequence PKPERDQLPEPHH. Tyr390 carries the phosphotyrosine; by Tyr-kinases modification. The chain crosses the membrane as a helical span at residues 470-488; sequence LFLWTFIVFTSVGTLVIFL.

This sequence belongs to the ligand-gated ion channel (TC 1.A.9) family. Acetylcholine receptor (TC 1.A.9.1) subfamily. Beta-1/CHRNB1 sub-subfamily. In terms of assembly, pentamer of two alpha chains, and one each of the beta, delta, and gamma (in immature muscle) or epsilon (in mature muscle) chains. The muscle heteropentamer composed of alpha-1, beta-1, delta, epsilon subunits interacts with the alpha-conotoxin ImII.

It localises to the postsynaptic cell membrane. The protein resides in the cell membrane. The catalysed reaction is K(+)(in) = K(+)(out). It carries out the reaction Na(+)(in) = Na(+)(out). Its function is as follows. After binding acetylcholine, the AChR responds by an extensive change in conformation that affects all subunits and leads to opening of an ion-conducting channel across the plasma membrane. The protein is Acetylcholine receptor subunit beta (Chrnb1) of Mus musculus (Mouse).